A 391-amino-acid chain; its full sequence is Homoserine O-acetyltransferase (391 aa).

An AB hydrolase-1 domain is found at 50–360; sequence NAILICHALT…DKGHDAFLLD (311 aa). S155 acts as the Nucleophile in catalysis. R225 lines the substrate pocket. Active-site residues include D321 and H354. Substrate is bound at residue D355.

The protein belongs to the AB hydrolase superfamily. MetX family. As to quaternary structure, homodimer.

It is found in the cytoplasm. It catalyses the reaction L-homoserine + acetyl-CoA = O-acetyl-L-homoserine + CoA. The protein operates within amino-acid biosynthesis; L-methionine biosynthesis via de novo pathway; O-acetyl-L-homoserine from L-homoserine: step 1/1. In terms of biological role, transfers an acetyl group from acetyl-CoA to L-homoserine, forming acetyl-L-homoserine. The protein is Homoserine O-acetyltransferase of Rhodospirillum rubrum (strain ATCC 11170 / ATH 1.1.1 / DSM 467 / LMG 4362 / NCIMB 8255 / S1).